Reading from the N-terminus, the 237-residue chain is tRNA (guanine-N(7)-)-methyltransferase (237 aa).

Positions 56, 81, 108, and 131 each coordinate S-adenosyl-L-methionine. Residue aspartate 131 is part of the active site. Residues lysine 135, aspartate 167, and 204 to 207 contribute to the substrate site; that span reads TKFE.

Belongs to the class I-like SAM-binding methyltransferase superfamily. TrmB family.

The enzyme catalyses guanosine(46) in tRNA + S-adenosyl-L-methionine = N(7)-methylguanosine(46) in tRNA + S-adenosyl-L-homocysteine. It functions in the pathway tRNA modification; N(7)-methylguanine-tRNA biosynthesis. Catalyzes the formation of N(7)-methylguanine at position 46 (m7G46) in tRNA. This is tRNA (guanine-N(7)-)-methyltransferase from Legionella pneumophila (strain Paris).